We begin with the raw amino-acid sequence, 122 residues long: Putative TLX1 neighbor protein (122 aa).

The disordered stretch occupies residues 21–122 (SLLSQEAMGP…LGGGRGQRGQ (102 aa)). A compositionally biased stretch (gly residues) spans 113–122 (LGGGRGQRGQ).

The polypeptide is Putative TLX1 neighbor protein (TLX1NB) (Homo sapiens (Human)).